The following is a 362-amino-acid chain: Putative sphingolipid delta(4)-desaturase/C4-monooxygenase (362 aa).

A run of 3 helical transmembrane segments spans residues 45 to 61 (YVVS…CWLL), 71 to 91 (LEAY…IHDI), and 107 to 127 (FFGM…FKKY). The Histidine box-1 signature appears at 89-93 (HDISH). The Histidine box-2 signature appears at 128 to 132 (HVEHH). Helical transmembrane passes span 160–177 (LLWL…PLII) and 198–218 (LLIL…GTII). A Histidine box-3 motif is present at residues 259 to 263 (HVEHH).

It belongs to the fatty acid desaturase type 1 family. DEGS subfamily.

The protein localises to the membrane. The enzyme catalyses an N-acyl-15-methylhexadecasphinganine + 2 Fe(II)-[cytochrome b5] + O2 + 2 H(+) = an N-acyl-4-hydroxy-15-methylhexadecasphinganine + 2 Fe(III)-[cytochrome b5] + H2O. The catalysed reaction is an N-acyl-15-methylhexadecasphinganine + 2 Fe(II)-[cytochrome b5] + O2 + 2 H(+) = an N-acyl-15-methylhexadecasphing-4-enine + 2 Fe(III)-[cytochrome b5] + 2 H2O. It carries out the reaction a dihydroceramide + 2 Fe(II)-[cytochrome b5] + O2 + 2 H(+) = a phytoceramide + 2 Fe(III)-[cytochrome b5] + H2O. It catalyses the reaction an N-acylsphinganine + 2 Fe(II)-[cytochrome b5] + O2 + 2 H(+) = an N-acylsphing-4-enine + 2 Fe(III)-[cytochrome b5] + 2 H2O. The enzyme catalyses N-octanoylsphinganine + 2 Fe(II)-[cytochrome b5] + O2 + 2 H(+) = N-octanoyl-4-hydroxysphinganine + 2 Fe(III)-[cytochrome b5] + H2O. The catalysed reaction is an N-acylsphinganine + 2 Fe(II)-[cytochrome b5] + O2 + 2 H(+) = an N-acyl-(4R)-4-hydroxysphinganine + 2 Fe(III)-[cytochrome b5] + H2O. Its pathway is lipid metabolism; sphingolipid metabolism. Bifunctional enzyme which acts both as a sphingolipid delta(4)-desaturase and a sphingolipid C4-monooxygenase. C.elegans contain specific sphingoid bases, which are unique or different in structure compared to the sphingoid bases found in other animals. Two examples of these distinctive compounds are: 15-methylhexadecasphinganine and 15-methylhexadecasphing-4-enine and this enzyme can catalyze their conversion. In Caenorhabditis elegans, this protein is Putative sphingolipid delta(4)-desaturase/C4-monooxygenase (ttm-5).